The sequence spans 73 residues: uncharacterized protein (73 aa).

The chain crosses the membrane as a helical span at residues 54 to 72; it reads VSFIVAPTVMQVQCLFFFI.

The protein localises to the membrane. This is an uncharacterized protein from Saccharomyces cerevisiae (strain ATCC 204508 / S288c) (Baker's yeast).